The chain runs to 396 residues: 1-deoxy-D-xylulose 5-phosphate reductoisomerase (396 aa).

Residues T10, G11, S12, I13, Q38, and N124 each contribute to the NADPH site. K125 is a 1-deoxy-D-xylulose 5-phosphate binding site. E126 is an NADPH binding site. D150 is a Mn(2+) binding site. The 1-deoxy-D-xylulose 5-phosphate site is built by S151, E152, S179, and H202. E152 contacts Mn(2+). G208 contributes to the NADPH binding site. S215, N220, K221, and E224 together coordinate 1-deoxy-D-xylulose 5-phosphate. E224 is a binding site for Mn(2+).

The protein belongs to the DXR family. Mg(2+) serves as cofactor. The cofactor is Mn(2+).

The catalysed reaction is 2-C-methyl-D-erythritol 4-phosphate + NADP(+) = 1-deoxy-D-xylulose 5-phosphate + NADPH + H(+). It functions in the pathway isoprenoid biosynthesis; isopentenyl diphosphate biosynthesis via DXP pathway; isopentenyl diphosphate from 1-deoxy-D-xylulose 5-phosphate: step 1/6. In terms of biological role, catalyzes the NADPH-dependent rearrangement and reduction of 1-deoxy-D-xylulose-5-phosphate (DXP) to 2-C-methyl-D-erythritol 4-phosphate (MEP). The chain is 1-deoxy-D-xylulose 5-phosphate reductoisomerase from Ralstonia pickettii (strain 12J).